The sequence spans 453 residues: Probable glycine dehydrogenase (decarboxylating) subunit 1 (453 aa).

This sequence belongs to the GcvP family. N-terminal subunit subfamily. As to quaternary structure, the glycine cleavage system is composed of four proteins: P, T, L and H. In this organism, the P 'protein' is a heterodimer of two subunits.

The catalysed reaction is N(6)-[(R)-lipoyl]-L-lysyl-[glycine-cleavage complex H protein] + glycine + H(+) = N(6)-[(R)-S(8)-aminomethyldihydrolipoyl]-L-lysyl-[glycine-cleavage complex H protein] + CO2. Its function is as follows. The glycine cleavage system catalyzes the degradation of glycine. The P protein binds the alpha-amino group of glycine through its pyridoxal phosphate cofactor; CO(2) is released and the remaining methylamine moiety is then transferred to the lipoamide cofactor of the H protein. The chain is Probable glycine dehydrogenase (decarboxylating) subunit 1 from Caulobacter sp. (strain K31).